The primary structure comprises 637 residues: Chaperone protein dnaK2 (637 aa).

T197 is modified (phosphothreonine; by autocatalysis). The interval 602–637 (AAAGGAAPGGDAGASAASGGGDASDDVIDAEFTETK) is disordered. Gly residues predominate over residues 603 to 623 (AAGGAAPGGDAGASAASGGGD). A compositionally biased stretch (acidic residues) spans 624-637 (ASDDVIDAEFTETK).

This sequence belongs to the heat shock protein 70 family.

Acts as a chaperone. This chain is Chaperone protein dnaK2 (dnaK2), found in Parasynechococcus marenigrum (strain WH8102).